The chain runs to 124 residues: Ribonuclease pancreatic (124 aa).

The span at 1 to 13 (KESAAAKFERQHM) shows a compositional bias: basic and acidic residues. Residues 1 to 24 (KESAAAKFERQHMDSSTSSASSSN) form a disordered region. Substrate-binding residues include K7 and R10. The Proton acceptor role is filled by H12. Cystine bridges form between C26/C84, C40/C95, C58/C110, and C65/C72. N-linked (GlcNAc...) asparagine; partial glycosylation occurs at N34. Substrate contacts are provided by residues 41–45 (KPVNT), K66, and R85. The active-site Proton donor is H119.

It belongs to the pancreatic ribonuclease family. Monomer. Interacts with and forms tight 1:1 complexes with RNH1. Dimerization of two such complexes may occur. Interaction with RNH1 inhibits this protein. As to expression, pancreas.

The protein localises to the secreted. It catalyses the reaction an [RNA] containing cytidine + H2O = an [RNA]-3'-cytidine-3'-phosphate + a 5'-hydroxy-ribonucleotide-3'-[RNA].. The enzyme catalyses an [RNA] containing uridine + H2O = an [RNA]-3'-uridine-3'-phosphate + a 5'-hydroxy-ribonucleotide-3'-[RNA].. Its function is as follows. Endonuclease that catalyzes the cleavage of RNA on the 3' side of pyrimidine nucleotides. Acts on single-stranded and double-stranded RNA. The polypeptide is Ribonuclease pancreatic (RNASE1) (Ovis aries (Sheep)).